A 397-amino-acid chain; its full sequence is Elongation factor Tu (397 aa).

Residues K10–V207 enclose the tr-type G domain. The tract at residues G19–T26 is G1. G19 to T26 contributes to the GTP binding site. T26 is a binding site for Mg(2+). A G2 region spans residues G60 to N64. A G3 region spans residues D81–G84. Residues D81–H85 and N136–D139 contribute to the GTP site. The tract at residues N136–D139 is G4. Positions S174–L176 are G5.

Belongs to the TRAFAC class translation factor GTPase superfamily. Classic translation factor GTPase family. EF-Tu/EF-1A subfamily. Monomer.

It localises to the cytoplasm. It catalyses the reaction GTP + H2O = GDP + phosphate + H(+). Functionally, GTP hydrolase that promotes the GTP-dependent binding of aminoacyl-tRNA to the A-site of ribosomes during protein biosynthesis. The sequence is that of Elongation factor Tu from Ectopseudomonas mendocina (strain ymp) (Pseudomonas mendocina).